The primary structure comprises 362 residues: CLIP domain-containing serine protease B10 (362 aa).

An N-terminal signal peptide occupies residues 1-19 (MAKVVDCVLLLAFIAVVRG). The region spanning 22-75 (ACRTPDHRDGVCHPVQQCPSVRDEFFNSDRVLSEDEIDYLRKLQCKTKDVTICC) is the Clip domain. Cystine bridges form between C23-C74, C33-C66, and C39-C75. The Peptidase S1 domain maps to 110–361 (IIGGNYTAID…YLDWIRQNIR (252 aa)). N-linked (GlcNAc...) asparagine glycosylation occurs at N114. C140 and C156 are disulfide-bonded. Residues H155 and D220 each act as charge relay system in the active site. N254 carries an N-linked (GlcNAc...) asparagine glycan. Cystine bridges form between C285–C300 and C310–C337. Residue S314 is the Charge relay system of the active site.

The protein belongs to the peptidase S1 family. CLIP subfamily. Forms a covalent heterodimer with SRPN2; the interaction inhibits CLIPB10 catalytic activity. Cleaved by an unknown protease into an active form.

It is found in the secreted. Inhibited by serpin SRPN2. In terms of biological role, serine protease which preferentially cleaves after arginine residues. Involved in the innate immune response against parasite P.bergei infection by activating the melanization cascade. Probably in the hemolymph, cleaves and activates prophenoloxidase (PPO), which functions in the formation of pigments such as melanin and other polyphenolic compounds. In the susceptible strain G3, appears to be dispensable for ookinete elimination which occurs by lysis. The protein is CLIP domain-containing serine protease B10 of Anopheles gambiae (African malaria mosquito).